The primary structure comprises 357 residues: Protein-glutamate methylesterase/protein-glutamine glutaminase (357 aa).

The region spanning 3 to 120 (RVLVVDDSAF…SIDLYKVRDM (118 aa)) is the Response regulatory domain. At Asp-54 the chain carries 4-aspartylphosphate. A CheB-type methylesterase domain is found at 161–355 (FRAGKQLICI…AAIMTYMKKE (195 aa)). Catalysis depends on residues Ser-173, His-200, and Asp-296.

This sequence belongs to the CheB family. In terms of processing, phosphorylated by CheA. Phosphorylation of the N-terminal regulatory domain activates the methylesterase activity.

It localises to the cytoplasm. It catalyses the reaction [protein]-L-glutamate 5-O-methyl ester + H2O = L-glutamyl-[protein] + methanol + H(+). It carries out the reaction L-glutaminyl-[protein] + H2O = L-glutamyl-[protein] + NH4(+). Its function is as follows. Involved in chemotaxis. Part of a chemotaxis signal transduction system that modulates chemotaxis in response to various stimuli. Catalyzes the demethylation of specific methylglutamate residues introduced into the chemoreceptors (methyl-accepting chemotaxis proteins or MCP) by CheR. Also mediates the irreversible deamidation of specific glutamine residues to glutamic acid. The chain is Protein-glutamate methylesterase/protein-glutamine glutaminase from Bacillus licheniformis (strain ATCC 14580 / DSM 13 / JCM 2505 / CCUG 7422 / NBRC 12200 / NCIMB 9375 / NCTC 10341 / NRRL NRS-1264 / Gibson 46).